The sequence spans 144 residues: 3-hydroxyacyl-[acyl-carrier-protein] dehydratase FabZ (144 aa).

His51 is an active-site residue.

The protein belongs to the thioester dehydratase family. FabZ subfamily.

The protein localises to the cytoplasm. The catalysed reaction is a (3R)-hydroxyacyl-[ACP] = a (2E)-enoyl-[ACP] + H2O. Functionally, involved in unsaturated fatty acids biosynthesis. Catalyzes the dehydration of short chain beta-hydroxyacyl-ACPs and long chain saturated and unsaturated beta-hydroxyacyl-ACPs. This Clostridium botulinum (strain 657 / Type Ba4) protein is 3-hydroxyacyl-[acyl-carrier-protein] dehydratase FabZ.